The chain runs to 269 residues: Staphylococcal secretory antigen ssaA2 (269 aa).

Residues 1–27 (MKKIATATIATAGFATIAIASGNQAHA) form the signal peptide. Repeat copies occupy residues 83–85 (YNN), 88–90 (YNN), 91–93 (YNN), 97–99 (YNN), 103–105 (YNN), 106–108 (YSN), and 115–117 (YNN). Positions 83–115 (YNNYSYNNYNNGYSYNNYSRYNNYSNNNQSYNY) are 7 X 3 AA repeats of Y-[NS]-N. One can recognise a Peptidase C51 domain in the interval 148 to 269 (MAPSSNGRSI…SQAAGYNFIH (122 aa)).

Its subcellular location is the secreted. In terms of biological role, not known; immunogenic protein. In Staphylococcus aureus (strain MRSA252), this protein is Staphylococcal secretory antigen ssaA2 (ssaA2).